Here is a 251-residue protein sequence, read N- to C-terminus: ATP synthase subunit a (251 aa).

The next 5 helical transmembrane spans lie at 28–48 (TDTV…AFFL), 84–104 (IAPF…ISNW), 130–150 (INYV…AGIW), 192–212 (IFAG…IMWA), and 220–240 (FDLF…ILYF).

The protein belongs to the ATPase A chain family. In terms of assembly, F-type ATPases have 2 components, CF(1) - the catalytic core - and CF(0) - the membrane proton channel. CF(1) has five subunits: alpha(3), beta(3), gamma(1), delta(1), epsilon(1). CF(0) has three main subunits: a(1), b(2) and c(9-12). The alpha and beta chains form an alternating ring which encloses part of the gamma chain. CF(1) is attached to CF(0) by a central stalk formed by the gamma and epsilon chains, while a peripheral stalk is formed by the delta and b chains.

It localises to the cell membrane. Functionally, key component of the proton channel; it plays a direct role in the translocation of protons across the membrane. This Mycobacterium leprae (strain TN) protein is ATP synthase subunit a.